An 811-amino-acid polypeptide reads, in one-letter code: Probable inorganic carbon transporter subunit DabA (811 aa).

Positions 336, 338, 498, and 513 each coordinate Zn(2+).

It belongs to the inorganic carbon transporter (TC 9.A.2) DabA family. In terms of assembly, forms a complex with DabB. It depends on Zn(2+) as a cofactor.

It localises to the cell inner membrane. Functionally, part of an energy-coupled inorganic carbon pump. This Rhodospirillum centenum (strain ATCC 51521 / SW) protein is Probable inorganic carbon transporter subunit DabA.